The chain runs to 194 residues: Cysteine and glycine-rich protein 2 (194 aa).

Residues 10–61 enclose the LIM zinc-binding 1 domain; that stretch reads CGACGRTVYHAEEVQCDGRSFHRCCFLCMVCRKNLDSTTVAIHDAEVYCKSC. The Nuclear localization signal signature appears at 64–69; the sequence is KKYGPK. The segment at 85-110 is disordered; sequence GERLGIKPESSPSPHRPTTNPNTSKF. Over residues 94 to 110 the composition is skewed to polar residues; sequence SSPSPHRPTTNPNTSKF. The LIM zinc-binding 2 domain occupies 120 to 171; it reads CSRCGDSVYAAEKVIGAGKPWHKNCFRCAKCGKSLESTTLTEKEGEIYCKGC.

It localises to the nucleus. In terms of biological role, interacts with zyxin. May be a component of a signal transduction pathway that mediates adhesion-stimulated changes in gene expression. Totally down-regulated in transformed cells. The protein is Cysteine and glycine-rich protein 2 (CSRP2) of Coturnix japonica (Japanese quail).